The chain runs to 221 residues: Probable hydrogenase maturation factor HypB (221 aa).

A G-domain region spans residues 35-196 (AFDFMGAIGS…KRINPDAEVV (162 aa)). Cysteine 95 and histidine 96 together coordinate Ni(2+). Zn(2+)-binding residues include cysteine 95, histidine 96, histidine 100, histidine 104, and cysteine 127. Residue cysteine 127 coordinates Ni(2+).

The protein belongs to the SIMIBI class G3E GTPase family. HypB/HupM subfamily. As to quaternary structure, homodimer.

In terms of biological role, involved in the maturation of [NiFe] hydrogenases. Required for nickel insertion into the metal center of the hydrogenase. Exhibits a low intrinsic GTPase activity, which is essential for nickel insertion. This Methanocaldococcus jannaschii (strain ATCC 43067 / DSM 2661 / JAL-1 / JCM 10045 / NBRC 100440) (Methanococcus jannaschii) protein is Probable hydrogenase maturation factor HypB.